The sequence spans 513 residues: MDEFHRYGKEDNSRQQCFLYPLFFQEDLYAISHDHYLDGSSSSEPMEHLSSNDQFSFLTVKRLIGQIRQQNHSIVLFVNCAPNPLADCKKSSYSESVLEGLTLVLEVPFSIRSKYSGMNEWKSFRSIHSIFPFLEDKFPHSNYISDARIPYSIHPEILVRTFRRLIRDAPSLHPLRSVLYEYRNSPENLQRSIIVVPRVNTRFFLFLWNYYVYECESILFSLLKRSSHSRSLSHRPFPQRTHFHRKIKHIIIFSRRNSLKSIWLLKDPKIHYVRYGERSIIAIKGTHLLVKKCRYYLLLFRQCYFHLWSEPYRVCSHQLSKNCSSSPGYFLRVRMNPLFVRTKMLDELFIADLITNEFDPIVPIVPILGLLAREKFCDVSGRPISKLSWTNLTDDDILNRFDQIWRNLFHYYSGSFGRDGLYRIKYILSLSCAKTLACKHKSTIRVVRKELGPELFQKSFSKEREFDSLPFSSKAAARSQRERIWHSDIPQINPLVNSWQKIQDLKIENLFDQ.

The protein belongs to the intron maturase 2 family. MatK subfamily.

It is found in the plastid. The protein resides in the chloroplast. Its function is as follows. Usually encoded in the trnK tRNA gene intron. Probably assists in splicing its own and other chloroplast group II introns. The sequence is that of Maturase K from Pinus parviflora (Japanese white pine).